A 417-amino-acid polypeptide reads, in one-letter code: Glucose-1-phosphate adenylyltransferase (417 aa).

Alpha-D-glucose 1-phosphate-binding positions include Tyr105, Gly170, 185–186, and Ser203; that span reads EK.

Belongs to the bacterial/plant glucose-1-phosphate adenylyltransferase family. Homotetramer.

The catalysed reaction is alpha-D-glucose 1-phosphate + ATP + H(+) = ADP-alpha-D-glucose + diphosphate. It participates in glycan biosynthesis; glycogen biosynthesis. Involved in the biosynthesis of ADP-glucose, a building block required for the elongation reactions to produce glycogen. Catalyzes the reaction between ATP and alpha-D-glucose 1-phosphate (G1P) to produce pyrophosphate and ADP-Glc. This Granulibacter bethesdensis (strain ATCC BAA-1260 / CGDNIH1) protein is Glucose-1-phosphate adenylyltransferase.